Reading from the N-terminus, the 285-residue chain is Protein phosphatase 1 regulatory subunit 3C (285 aa).

A PP1-binding motif motif is present at residues 72-75; the sequence is KVVF. The CBM21 domain maps to 133 to 241; sequence RKRLMKNSVC…NNNGKNYALV (109 aa).

As to quaternary structure, interacts with PPP1CC catalytic subunit of PP1 and associates with glycogen. Forms complexes with glycogen phosphorylase, glycogen synthase and phosphorylase kinase which is necessary for its regulation of PP1 activity. Ubiquitously expressed in the examined tissues including brain, muscle, liver and spleen under normoxic condition. Its expression is higher in insulin sensitive tissues (liver and muscle) than in the brain and spleen. Significantly increased expression in the liver and muscle under short-term (1-12 hours) hypoxia exposure. Significantly increased expression after long-term (natural) hypoxia exposure in liver and spleen. No significant differences in expression in brain for any time periods.

Functionally, acts as a glycogen-targeting subunit for PP1 and regulates its activity. Activates glycogen synthase, reduces glycogen phosphorylase activity and limits glycogen breakdown. The protein is Protein phosphatase 1 regulatory subunit 3C of Clarias batrachus (Walking catfish).